Reading from the N-terminus, the 383-residue chain is Putative glutamate--cysteine ligase 2 (383 aa).

Belongs to the glutamate--cysteine ligase type 2 family. YbdK subfamily.

The catalysed reaction is L-cysteine + L-glutamate + ATP = gamma-L-glutamyl-L-cysteine + ADP + phosphate + H(+). In terms of biological role, ATP-dependent carboxylate-amine ligase which exhibits weak glutamate--cysteine ligase activity. The sequence is that of Putative glutamate--cysteine ligase 2 from Clavibacter sepedonicus (Clavibacter michiganensis subsp. sepedonicus).